We begin with the raw amino-acid sequence, 403 residues long: Octaketide synthase 1 (403 aa).

Cys174 is a catalytic residue. CoA-binding positions include Ser281 and 318-321 (GGRA).

It belongs to the thiolase-like superfamily. Chalcone/stilbene synthases family. In terms of assembly, homodimer.

It functions in the pathway secondary metabolite biosynthesis; flavonoid biosynthesis. Its function is as follows. Catalyzes the iterative condensations of 8 molecules of malonyl-CoA to produce aromatic octaketides, SEK4 and SEK4b, the products of the minimal polyketide synthase for the benzoisochromanequinone actinorhodin. May be involved in the biosynthesis of the octaketide barbaloin. The polypeptide is Octaketide synthase 1 (Aloe arborescens (Kidachi aloe)).